The chain runs to 182 residues: Ribosome-recycling factor (182 aa).

A disordered region spans residues 136 to 156; sequence IRKQEKNSDISKDESRDLQDK.

The protein belongs to the RRF family.

Its subcellular location is the cytoplasm. Responsible for the release of ribosomes from messenger RNA at the termination of protein biosynthesis. May increase the efficiency of translation by recycling ribosomes from one round of translation to another. The chain is Ribosome-recycling factor from Trichodesmium erythraeum (strain IMS101).